A 295-amino-acid chain; its full sequence is Acetyl-coenzyme A carboxylase carboxyl transferase subunit beta (295 aa).

Residues 1-20 (MSWLSKLMPSGIRTENTPAK) form a disordered region. A CoA carboxyltransferase N-terminal domain is found at 28-295 (LWEKCSNCGS…QPHPQDADAA (268 aa)). Residues C32, C35, C51, and C54 each contribute to the Zn(2+) site. A C4-type zinc finger spans residues 32 to 54 (CSNCGSALYGPELEENLEVCPKC).

The protein belongs to the AccD/PCCB family. As to quaternary structure, acetyl-CoA carboxylase is a heterohexamer composed of biotin carboxyl carrier protein (AccB), biotin carboxylase (AccC) and two subunits each of ACCase subunit alpha (AccA) and ACCase subunit beta (AccD). Zn(2+) is required as a cofactor.

The protein localises to the cytoplasm. The enzyme catalyses N(6)-carboxybiotinyl-L-lysyl-[protein] + acetyl-CoA = N(6)-biotinyl-L-lysyl-[protein] + malonyl-CoA. It functions in the pathway lipid metabolism; malonyl-CoA biosynthesis; malonyl-CoA from acetyl-CoA: step 1/1. In terms of biological role, component of the acetyl coenzyme A carboxylase (ACC) complex. Biotin carboxylase (BC) catalyzes the carboxylation of biotin on its carrier protein (BCCP) and then the CO(2) group is transferred by the transcarboxylase to acetyl-CoA to form malonyl-CoA. The protein is Acetyl-coenzyme A carboxylase carboxyl transferase subunit beta of Xanthomonas oryzae pv. oryzae (strain MAFF 311018).